A 548-amino-acid chain; its full sequence is Fluconazole resistance protein 1 (548 aa).

The disordered stretch occupies residues 30-94 (SAREDETRKP…WNGPSDPENP (65 aa)). Over residues 31–51 (AREDETRKPENTDKKECKPDY) the composition is skewed to basic and acidic residues. A compositionally biased stretch (low complexity) spans 60–73 (SCSESSTDSDSSGS). 12 helical membrane-spanning segments follow: residues 104 to 124 (LVVFQIMLLTCVTYMGSSIYT), 139 to 159 (VVATLNLSLYVLGYGLGPIIF), 179 to 199 (FFFMIFQVGCATVHNIGGLIV), 203 to 223 (ISGILCSPSLATGGGTVADII), 230 to 250 (LVLGMWSAGAVAAPVLAPLLG), 261 to 281 (FIFWLLMWLSAATFILLAFFF), 347 to 367 (IAVAYGCFYLFFEAFPIVFVG), 376 to 396 (VGLAYMGFCVGCVLAYGLFGI), 416 to 436 (FLIVAMCVCWCLPLSLFLFGW), 440 to 460 (VHWILPVISEVFFVLAVFNIF), 476 to 496 (ASVFAGNGFCRASFACAFPLF), and 511 to 531 (VAWGSSLVGFLTLGLAIIPFI).

It belongs to the major facilitator superfamily.

It is found in the membrane. In terms of biological role, probable efflux transporter. Confers resistance to the azole derivative fluconazole (FCZ). In Saccharomyces cerevisiae (strain ATCC 204508 / S288c) (Baker's yeast), this protein is Fluconazole resistance protein 1 (FLR1).